The sequence spans 95 residues: Protein TusB (95 aa).

The protein belongs to the DsrH/TusB family. In terms of assembly, heterohexamer, formed by a dimer of trimers. The hexameric TusBCD complex contains 2 copies each of TusB, TusC and TusD. The TusBCD complex interacts with TusE.

It is found in the cytoplasm. Functionally, part of a sulfur-relay system required for 2-thiolation of 5-methylaminomethyl-2-thiouridine (mnm(5)s(2)U) at tRNA wobble positions. In Pectobacterium carotovorum subsp. carotovorum (strain PC1), this protein is Protein TusB.